The sequence spans 491 residues: Sucrose transport protein SUC7 (491 aa).

Residues 1-13 are compositionally biased toward basic and acidic residues; that stretch reads MSDLQANKDETTV. The segment at 1–25 is disordered; sequence MSDLQANKDETTVDRQSSSSVDLDG. The Cytoplasmic portion of the chain corresponds to 1 to 32; the sequence is MSDLQANKDETTVDRQSSSSVDLDGPSPLRKM. At S17 the chain carries Phosphoserine. A helical membrane pass occupies residues 33–53; sequence ISVASIAAGIQFGWALQLSLL. Topologically, residues 54-67 are extracellular; it reads TPYVQLLGVPHKWP. A helical transmembrane segment spans residues 68–88; sequence SFIWLCGPVSGLLVQPSVGYF. Residues 89–100 lie on the Cytoplasmic side of the membrane; it reads SDRCTSRFGRRR. A helical transmembrane segment spans residues 101–121; that stretch reads PFIATGALLVAVSVVLIGYAA. Residues 122 to 138 lie on the Extracellular side of the membrane; it reads DFGHSMGDKIDKPVKMR. Residues 139–159 form a helical membrane-spanning segment; that stretch reads AVVIFALGFWILDVANNTLQG. Topologically, residues 160-180 are cytoplasmic; that stretch reads PCRAFLGDLAAGDAQKTRTAN. A helical transmembrane segment spans residues 181–201; it reads AFFSFFMAVGNVLGYAAGSYT. The Extracellular portion of the chain corresponds to 202 to 223; sequence NLYKIFPFTMTKACDIYCANLK. The helical transmembrane segment at 224–244 threads the bilayer; that stretch reads SCFFLSITLLLVVTIIALWYV. Topologically, residues 245–276 are cytoplasmic; that stretch reads EDKQWSPKADSDNEKTPFFGEIFGAFKVMKRP. A helical membrane pass occupies residues 277 to 297; the sequence is MWMLLIVTALNWIAWFPFLLY. Residues 298–323 are Extracellular-facing; it reads DTDWMGREVYGGDSKGDDKMKKLYNQ. A helical membrane pass occupies residues 324–344; sequence GIHVGALGLMLNSIVLGVMSL. The Cytoplasmic segment spans residues 345 to 358; it reads GIEGISRKMGGAKR. A helical transmembrane segment spans residues 359-379; it reads LWGAVNIILAVCLAMTVLVTK. Over 380–402 the chain is Extracellular; it reads KAEEHRRIAGPMALPTDGIRAGA. The helical transmembrane segment at 403 to 423 threads the bilayer; that stretch reads LTLFALLGIPLAITFSIPFAL. The Cytoplasmic portion of the chain corresponds to 424 to 443; sequence ASIISSSSGAGQRLSLGVLN. A helical membrane pass occupies residues 444-464; that stretch reads MAIVIPQMIVSFGVGPIDALF. Over 465-468 the chain is Extracellular; that stretch reads GDGN. A helical membrane pass occupies residues 469 to 489; that stretch reads LPGFVVGAIAAAVSSIVAFTV. Over 490–491 the chain is Cytoplasmic; sequence LP.

The protein belongs to the glycoside-pentoside-hexuronide (GPH) cation symporter transporter (TC 2.A.2.4) family. In terms of tissue distribution, expressed in anthers.

The protein resides in the cell membrane. Its pathway is glycan biosynthesis; sucrose metabolism. Functionally, may be responsible for the transport of glucosides into the cell, with the concomitant uptake of protons (symport system). Does not seem to transport sucrose. This is Sucrose transport protein SUC7 from Arabidopsis thaliana (Mouse-ear cress).